Reading from the N-terminus, the 443-residue chain is Thymidine phosphorylase (443 aa).

The protein belongs to the thymidine/pyrimidine-nucleoside phosphorylase family. As to quaternary structure, homodimer.

The catalysed reaction is thymidine + phosphate = 2-deoxy-alpha-D-ribose 1-phosphate + thymine. It functions in the pathway pyrimidine metabolism; dTMP biosynthesis via salvage pathway; dTMP from thymine: step 1/2. Functionally, the enzymes which catalyze the reversible phosphorolysis of pyrimidine nucleosides are involved in the degradation of these compounds and in their utilization as carbon and energy sources, or in the rescue of pyrimidine bases for nucleotide synthesis. The sequence is that of Thymidine phosphorylase from Shewanella sp. (strain ANA-3).